A 297-amino-acid chain; its full sequence is Ubiquinone biosynthesis protein COQ4, mitochondrial (297 aa).

The N-terminal 54 residues, 1–54, are a transit peptide targeting the mitochondrion; it reads MLSSARARLPISLCSFSLPFARLPNTLSRYQETWQRLPGRTHPTRSIRTTPAYE. Zn(2+) contacts are provided by histidine 178, aspartate 179, histidine 182, and glutamate 194.

Belongs to the COQ4 family. As to quaternary structure, component of a multi-subunit COQ enzyme complex, composed of at least COQ3, COQ4, COQ5, COQ6, COQ7 and COQ9. Zn(2+) serves as cofactor.

Its subcellular location is the mitochondrion inner membrane. It carries out the reaction a 4-hydroxy-3-methoxy-5-(all-trans-polyprenyl)benzoate + H(+) = a 2-methoxy-6-(all-trans-polyprenyl)phenol + CO2. It participates in cofactor biosynthesis; ubiquinone biosynthesis. Its function is as follows. Lyase that catalyzes the C1-decarboxylation of 4-hydroxy-3-methoxy-5-(all-trans-polyprenyl)benzoic acid into 2-methoxy-6-(all-trans-polyprenyl)phenol during ubiquinone biosynthesis. The chain is Ubiquinone biosynthesis protein COQ4, mitochondrial from Laccaria bicolor (strain S238N-H82 / ATCC MYA-4686) (Bicoloured deceiver).